We begin with the raw amino-acid sequence, 87 residues long: MANIKSAKKRAIQSEKRRKHNASRRSMVRTFIKKVYAAIATGDKEAAQKAFHDMQPIVDRHACKGLIHKNKAARHKSNLTAQINAMQ.

The segment at 1 to 26 (MANIKSAKKRAIQSEKRRKHNASRRS) is disordered.

Belongs to the bacterial ribosomal protein bS20 family.

In terms of biological role, binds directly to 16S ribosomal RNA. The chain is Small ribosomal subunit protein bS20 from Photorhabdus laumondii subsp. laumondii (strain DSM 15139 / CIP 105565 / TT01) (Photorhabdus luminescens subsp. laumondii).